A 1229-amino-acid polypeptide reads, in one-letter code: Chitin synthase 4 (1229 aa).

Positions 1-196 (MSLPERPGAK…IVKEGKRKEK (196 aa)) are disordered. Residues 1 to 202 (MSLPERPGAK…RKEKIPEQLR (202 aa)) lie on the Cytoplasmic side of the membrane. Residues 18-27 (SYRKSPSRRN) are compositionally biased toward basic residues. The span at 43-66 (GQHQRGPSVNSFAETIRSPNSNIE) shows a compositional bias: polar residues. Residues 92-105 (IRPERNRIDRDHPN) are compositionally biased toward basic and acidic residues. Positions 137 to 150 (SGPPSGSNSASGSG) are enriched in low complexity. Basic and acidic residues-rich tracts occupy residues 164 to 177 (SGRE…DNTR) and 187 to 196 (IVKEGKRKEK). Residues 203-223 (PPSAWNVYCAVITFWSPDFIM) traverse the membrane as a helical segment. Topologically, residues 224-240 (KCCGMPAKAQRRAWREK) are extracellular. The helical transmembrane segment at 241 to 261 (IGLISLILIIMGVVGFLTFGF) threads the bilayer. Topologically, residues 262 to 495 (NQAVCGGPVL…IKVGTVDTDT (234 aa)) are cytoplasmic. The helical transmembrane segment at 496 to 516 (VGCIAAKVVLYVSLALILSVV) threads the bilayer. Residues 517-1054 (GARFTLALIF…LCGTFCFSMQ (538 aa)) lie on the Extracellular side of the membrane. Disordered stretches follow at residues 539 to 589 (TSQT…RSSF) and 601 to 648 (GAER…DPYA). Residues 568-581 (GDVGSSVAGASSSD) are compositionally biased toward low complexity. Asparagine 608, asparagine 635, and asparagine 1030 each carry an N-linked (GlcNAc...) asparagine glycan. Residues 608–648 (NKSMPTTMASQASGGYMGPSSTAYRETNESRTSFLKSDPYA) show a composition bias toward polar residues. The helical transmembrane segment at 1055–1075 (FVIFIELIGTLVLPAAIAFTF) threads the bilayer. Residues 1076–1088 (YVVIISIINQPPQ) lie on the Cytoplasmic side of the membrane. The chain crosses the membrane as a helical span at residues 1089-1109 (IIPLVLLGLILGLPAILIIIT). Residues 1110-1114 (AHSWS) are Extracellular-facing. Residues 1115–1135 (YVLWMLIYLLSLPVWNFVLPA) traverse the membrane as a helical segment. Topologically, residues 1136-1229 (YAFWKFDDFS…QQYDEYYSDA (94 aa)) are cytoplasmic. A disordered region spans residues 1210-1229 (WASAPPHHHQQQYDEYYSDA).

The protein belongs to the chitin synthase family. Class IV subfamily.

The protein localises to the cell membrane. The enzyme catalyses [(1-&gt;4)-N-acetyl-beta-D-glucosaminyl](n) + UDP-N-acetyl-alpha-D-glucosamine = [(1-&gt;4)-N-acetyl-beta-D-glucosaminyl](n+1) + UDP + H(+). Its function is as follows. Polymerizes chitin, a structural polymer of the cell wall and septum, by transferring the sugar moiety of UDP-GlcNAc to the non-reducing end of the growing chitin polymer. Might function as a negative regulator on expression of other CHS genes. This chain is Chitin synthase 4, found in Pyricularia oryzae (strain 70-15 / ATCC MYA-4617 / FGSC 8958) (Rice blast fungus).